A 562-amino-acid chain; its full sequence is Phosphatidylinositol 4-phosphate 5-kinase type-1 alpha (562 aa).

In terms of domain architecture, PIPK spans 81–449 (TSSALKGAIQ…RFQRFMCNTV (369 aa)). Lys103 is covalently cross-linked (Glycyl lysine isopeptide (Lys-Gly) (interchain with G-Cter in ubiquitin)). Residue Ser486 is modified to Phosphoserine. Positions 506–526 (HLGRPDVLPQTPPLEEISEGS) are disordered.

Interacts with RAC1. Interacts with TUT1. Forms a complex with CDH1/E-cadherin, CTNNB1/beta-catenin and CTNND1 at the plasma membrane upon calcium stimulation. Found in a ternary complex with IRS1 and DGKZ in the absence of insulin stimulation. Interacts with DGKZ. Interacts with PIP4K2C; the interaction inhibits PIP5K1A kinase activity. Highly expressed in heart, placenta, skeletal muscle, kidney and pancreas. Detected at lower levels in brain, lung and liver.

It is found in the cell membrane. The protein localises to the cytoplasm. The protein resides in the nucleus. It localises to the nucleus speckle. Its subcellular location is the cell projection. It is found in the ruffle. The protein localises to the lamellipodium. It carries out the reaction a 1,2-diacyl-sn-glycero-3-phospho-(1D-myo-inositol 4-phosphate) + ATP = a 1,2-diacyl-sn-glycero-3-phospho-(1D-myo-inositol-4,5-bisphosphate) + ADP + H(+). It catalyses the reaction 1-octadecanoyl-2-(5Z,8Z,11Z,14Z)-eicosatetraenoyl-sn-glycero-3-phospho-1D-myo-inositol 4-phosphate + ATP = 1-octadecanoyl-2-(5Z,8Z,11Z,14Z)-eicosatetraenoyl-sn-glycero-3-phospho-1D-myo-inositol 4,5-bisphosphate + ADP + H(+). The catalysed reaction is 1,2-dihexadecanoyl-sn-glycero-3-phospho-(1D-myo-inositol-4-phosphate) + ATP = 1,2-dihexadecanoyl-sn-glycero-3-phospho-(1D-myo-inositol-4,5-bisphosphate) + ADP + H(+). The enzyme catalyses 1-octadecanoyl-2-(9Z)-octadecenoyl-sn-glycero-3-phospho-1D-myo-inositol 4-phosphate + ATP = 1-octadecanoyl-2-(9Z)-octadecenoyl-sn-glycero-3-phospho-1D-myo-inositol 4,5-bisphosphate + ADP + H(+). It carries out the reaction 1-octadecanoyl-2-(9Z)-octadecenoyl-sn-glycero-3-phospho-1D-myo-inositol + ATP = 1-octadecanoyl-2-(9Z)-octadecenoyl-sn-glycero-3-phospho-1D-myo-inositol 5-phosphate + ADP + H(+). It catalyses the reaction 1-octadecanoyl-2-(9Z,12Z)-octadecadienoyl-sn-glycero-3-phospho-1D-myo-inositol + ATP = 1-octadecanoyl-2-(9Z,12Z)-octadecadienoyl-sn-glycero-3-phospho-1D-myo-inositol 5-phosphate + ADP + H(+). The catalysed reaction is 1-octadecanoyl-2-(5Z,8Z,11Z,14Z-eicosatetraenoyl)-sn-glycero-3-phospho-(1D-myo-inositol) + ATP = 1-octadecanoyl-2-(5Z,8Z,11Z,14Z)-eicosatetraenoyl-sn-glycero-3-phospho-1D-myo-inositol 5-phosphate + ADP + H(+). The enzyme catalyses 1,2-di-(9Z,12Z)-octadecadienoyl-sn-glycero-3-phospho-1D-myo-inositol + ATP = 1,2-di(9Z,12Z)-octadecadienoyl-sn-glycero-3-phospho-1D-myo-inositol 5-phosphate + ADP + H(+). Its activity is regulated as follows. Activated by diarachidonoyl phosphatidic acid (DAPA), when 1,2-dipalmitoyl-PI4P is used as a substrate. Catalyzes the phosphorylation of phosphatidylinositol 4-phosphate (PtdIns(4)P/PI4P) to form phosphatidylinositol 4,5-bisphosphate (PtdIns(4,5)P2/PIP2), a lipid second messenger that regulates several cellular processes such as signal transduction, vesicle trafficking, actin cytoskeleton dynamics, cell adhesion, and cell motility. PtdIns(4,5)P2 can directly act as a second messenger or can be utilized as a precursor to generate other second messengers: inositol 1,4,5-trisphosphate (IP3), diacylglycerol (DAG) or phosphatidylinositol-3,4,5-trisphosphate (PtdIns(3,4,5)P3/PIP3). PIP5K1A-mediated phosphorylation of PtdIns(4)P is the predominant pathway for PtdIns(4,5)P2 synthesis. Can also use phosphatidylinositol (PtdIns) as substrate in vitro. Together with PIP5K1C, is required for phagocytosis, both enzymes regulating different types of actin remodeling at sequential steps. Promotes particle ingestion by activating the WAS GTPase-binding protein that induces Arp2/3 dependent actin polymerization at the nascent phagocytic cup. Together with PIP5K1B, is required, after stimulation by G-protein coupled receptors, for the synthesis of IP3 that will induce stable platelet adhesion. Recruited to the plasma membrane by the E-cadherin/beta-catenin complex where it provides the substrate PtdIns(4,5)P2 for the production of PtdIns(3,4,5)P3, IP3 and DAG, that will mobilize internal calcium and drive keratinocyte differentiation. Positively regulates insulin-induced translocation of SLC2A4 to the cell membrane in adipocytes. Together with PIP5K1C has a role during embryogenesis. Independently of its catalytic activity, is required for membrane ruffling formation, actin organization and focal adhesion formation during directional cell migration by controlling integrin-induced translocation of the small GTPase RAC1 to the plasma membrane. Also functions in the nucleus where it acts as an activator of TUT1 adenylyltransferase activity in nuclear speckles, thereby regulating mRNA polyadenylation of a select set of mRNAs. The sequence is that of Phosphatidylinositol 4-phosphate 5-kinase type-1 alpha from Homo sapiens (Human).